The following is a 253-amino-acid chain: MLIQDTIFYRPDWRWHNFLKYLTNNLSKYNCLEKKIPSEYSYKDSTYGSKKLKKNVNLSTWGVTHKKRIQFARAVCINSPNYSVLNFLIIPNTIYNVPFFGVDFVSLPNSHLLVLDFQPSLKIQKQYNNELLEKLIKLKNHCHSSLPLAEKMSADVARFFSPGVIWSKLPKEERSDFLITNQLYTSFKEYLDLYLEILFESKEVNLELQKELINGQNEYLNYRRDNDPARPMLSSLFGKEFTESLIEEVLFTT.

The protein belongs to the HY2 family.

The catalysed reaction is (3Z)-phycoerythrobilin + oxidized 2[4Fe-4S]-[ferredoxin] = 15,16-dihydrobiliverdin + reduced 2[4Fe-4S]-[ferredoxin] + 2 H(+). Its function is as follows. Catalyzes the two-electron reduction of the C2 and C3(1) diene system of 15,16-dihydrobiliverdin. The protein is Phycoerythrobilin:ferredoxin oxidoreductase of Prochlorococcus marinus (strain MIT 9301).